The chain runs to 293 residues: Autophagy-related protein 36 (293 aa).

Composition is skewed to polar residues over residues 98-108 and 260-273; these read ISSDSNKNSPP and GETL…ASSS. Disordered stretches follow at residues 98-121 and 250-273; these read ISSD…NIRS and SRSR…ASSS.

As to quaternary structure, interacts with PEX3, ATG8 and ATG11.

It localises to the peroxisome. Functionally, required for autophagic breakdown of peroxisomes, called pexophagy, through linking peroxisomes to the autophagy apparatus. Involved in regulation of the glyoxylate cycle. This Saccharomyces cerevisiae (strain ATCC 204508 / S288c) (Baker's yeast) protein is Autophagy-related protein 36 (ATG36).